A 268-amino-acid polypeptide reads, in one-letter code: Tryptophan synthase alpha chain (268 aa).

Active-site proton acceptor residues include E49 and D60.

This sequence belongs to the TrpA family. Tetramer of two alpha and two beta chains.

It catalyses the reaction (1S,2R)-1-C-(indol-3-yl)glycerol 3-phosphate + L-serine = D-glyceraldehyde 3-phosphate + L-tryptophan + H2O. It functions in the pathway amino-acid biosynthesis; L-tryptophan biosynthesis; L-tryptophan from chorismate: step 5/5. Functionally, the alpha subunit is responsible for the aldol cleavage of indoleglycerol phosphate to indole and glyceraldehyde 3-phosphate. The chain is Tryptophan synthase alpha chain from Escherichia coli O7:K1 (strain IAI39 / ExPEC).